Consider the following 383-residue polypeptide: Putative dehydratase subunit YjiM (383 aa).

Belongs to the FldB/FldC dehydratase alpha/beta subunit family.

The protein is Putative dehydratase subunit YjiM (yjiM) of Escherichia coli (strain K12).